A 324-amino-acid polypeptide reads, in one-letter code: Glutamyl-Q tRNA(Asp) synthetase (324 aa).

Residues 5-9 (RLAPS) and Glu41 contribute to the L-glutamate site. The 'HIGH' region signature appears at 8–18 (PSPTGNIHLGN). 4 residues coordinate Zn(2+): Cys105, Cys107, Tyr128, and Cys132. Tyr193 and Arg211 together coordinate L-glutamate. Positions 249 to 253 (RLAKR) match the 'KMSKS' region motif. Lys252 is an ATP binding site.

It belongs to the class-I aminoacyl-tRNA synthetase family. GluQ subfamily. Zn(2+) serves as cofactor.

In terms of biological role, catalyzes the tRNA-independent activation of glutamate in presence of ATP and the subsequent transfer of glutamate onto a tRNA(Asp). Glutamate is transferred on the 2-amino-5-(4,5-dihydroxy-2-cyclopenten-1-yl) moiety of the queuosine in the wobble position of the QUC anticodon. The protein is Glutamyl-Q tRNA(Asp) synthetase of Nitratidesulfovibrio vulgaris (strain ATCC 29579 / DSM 644 / CCUG 34227 / NCIMB 8303 / VKM B-1760 / Hildenborough) (Desulfovibrio vulgaris).